Consider the following 175-residue polypeptide: Disulfide bond formation protein B (175 aa).

At methionine 1–alanine 13 the chain is on the cytoplasmic side. The chain crosses the membrane as a helical span at residues tryptophan 14–tyrosine 30. The Periplasmic portion of the chain corresponds to phenylalanine 31 to valine 48. Cysteine 40 and cysteine 43 form a disulfide bridge. The helical transmembrane segment at alanine 49–proline 64 threads the bilayer. At arginine 65–phenylalanine 71 the chain is on the cytoplasmic side. The chain crosses the membrane as a helical span at residues leucine 72–phenylalanine 89. The Periplasmic segment spans residues glutamate 90 to glutamine 144. Cysteines 104 and 130 form a disulfide. The chain crosses the membrane as a helical span at residues tryptophan 145–proline 163. At glycine 164 to serine 175 the chain is on the cytoplasmic side.

The protein belongs to the DsbB family.

Its subcellular location is the cell inner membrane. Required for disulfide bond formation in some periplasmic proteins. Acts by oxidizing the DsbA protein. The chain is Disulfide bond formation protein B from Shewanella denitrificans (strain OS217 / ATCC BAA-1090 / DSM 15013).